Reading from the N-terminus, the 877-residue chain is Dolichyl-phosphate-mannose--protein mannosyltransferase 1 (877 aa).

Asparagine 83 is a glycosylation site (N-linked (GlcNAc...) asparagine). The next 2 membrane-spanning stretches (helical) occupy residues 109-129 and 150-170; these read FFMDVHPPLAKMLFGAVGAIG and YIFMRQFPALLGVGTVILCYL. N-linked (GlcNAc...) asparagine glycosylation occurs at asparagine 195. 4 helical membrane-spanning segments follow: residues 196–216, 226–246, 252–272, and 291–311; these read VTISRYILLDSPLIFFIAAAI, IPFTFGWYRSLLATGIALGLA, VGLFTVAWVGFLCIYQLWFLI, and IILLGVPIALYLGFFAIHFQL. The MIR 1 domain occupies 340–394; that stretch reads TEQVGLGSVVTIRHVDTQGGYLHSHEHFYQTGSKQQQITLYPHLDSNNKWLIEPY. 2 N-linked (GlcNAc...) asparagine glycosylation sites follow: asparagine 395 and asparagine 400. MIR domains follow at residues 403–462 and 472–528; these read FVPL…VEIV and QTFV…IETN. 4 helical membrane passes run 604 to 624, 643 to 663, 666 to 686, and 700 to 720; these read TWWAATLSIITFGTYVLVTVF, VQTFSYVLGWALHYLPFFIMG, LFLHHYLPALYFGILALGHFF, and FQQVAFVLVGLFSILSLVFYV. Residue asparagine 721 is glycosylated (N-linked (GlcNAc...) asparagine). Positions 778 to 877 are disordered; the sequence is VVEAKQTPKA…EDESVHQVQQ (100 aa). Composition is skewed to basic and acidic residues over residues 783–799, 807–816, and 847–857; these read QTPKAEPKLAKQDDHIE, VEEKEVKEEV, and NDEKSVEEKQQ.

Belongs to the glycosyltransferase 39 family. As to quaternary structure, PMT1 and PMT2 form a functional heterodimer.

Its subcellular location is the endoplasmic reticulum membrane. The catalysed reaction is a di-trans,poly-cis-dolichyl beta-D-mannosyl phosphate + L-seryl-[protein] = 3-O-(alpha-D-mannosyl)-L-seryl-[protein] + a di-trans,poly-cis-dolichyl phosphate + H(+). It catalyses the reaction a di-trans,poly-cis-dolichyl beta-D-mannosyl phosphate + L-threonyl-[protein] = 3-O-(alpha-D-mannosyl)-L-threonyl-[protein] + a di-trans,poly-cis-dolichyl phosphate + H(+). The protein operates within protein modification; protein glycosylation. Protein mannosyltransferase (PMT) involved in hyphal growth and drug sensitivity. Transfers mannose from Dol-P-mannose to Ser or Thr residues on proteins. PMT1, PMT2 and PMT4 account for most of the protein-O-glycosylation activity, while PMT5 and PMT6 may specifically modulate a much narrower spectrum of target proteins. Accounts for the O-glycosylation of the cell wall proteins KRE9, PIR2, RHD3, and ALS1, as well as the SEC20 t-SNARE component. O-glycosylation of SEC20 is essential for its stability. Required for filamentation and early phases of biofilm formation. In Candida albicans (strain SC5314 / ATCC MYA-2876) (Yeast), this protein is Dolichyl-phosphate-mannose--protein mannosyltransferase 1 (PMT1).